Reading from the N-terminus, the 335-residue chain is Ferrochelatase (335 aa).

Fe cation-binding residues include histidine 194 and glutamate 275.

Belongs to the ferrochelatase family.

Its subcellular location is the cytoplasm. The enzyme catalyses heme b + 2 H(+) = protoporphyrin IX + Fe(2+). It participates in porphyrin-containing compound metabolism; protoheme biosynthesis; protoheme from protoporphyrin-IX: step 1/1. Catalyzes the ferrous insertion into protoporphyrin IX. This is Ferrochelatase from Sodalis glossinidius (strain morsitans).